The primary structure comprises 434 residues: 3-phosphoshikimate 1-carboxyvinyltransferase (434 aa).

3-phosphoshikimate contacts are provided by Lys-22, Ser-23, and Arg-27. Position 22 (Lys-22) interacts with phosphoenolpyruvate. Gly-93 and Arg-121 together coordinate phosphoenolpyruvate. Positions 168, 169, 170, 199, 320, and 347 each coordinate 3-phosphoshikimate. Gln-170 contributes to the phosphoenolpyruvate binding site. Catalysis depends on Asp-320, which acts as the Proton acceptor. Phosphoenolpyruvate is bound by residues Arg-351, Arg-394, and Lys-419.

It belongs to the EPSP synthase family. As to quaternary structure, monomer.

The protein resides in the cytoplasm. It carries out the reaction 3-phosphoshikimate + phosphoenolpyruvate = 5-O-(1-carboxyvinyl)-3-phosphoshikimate + phosphate. It functions in the pathway metabolic intermediate biosynthesis; chorismate biosynthesis; chorismate from D-erythrose 4-phosphate and phosphoenolpyruvate: step 6/7. Functionally, catalyzes the transfer of the enolpyruvyl moiety of phosphoenolpyruvate (PEP) to the 5-hydroxyl of shikimate-3-phosphate (S3P) to produce enolpyruvyl shikimate-3-phosphate and inorganic phosphate. The sequence is that of 3-phosphoshikimate 1-carboxyvinyltransferase from Burkholderia cenocepacia (strain ATCC BAA-245 / DSM 16553 / LMG 16656 / NCTC 13227 / J2315 / CF5610) (Burkholderia cepacia (strain J2315)).